We begin with the raw amino-acid sequence, 220 residues long: SAGA-associated factor 11 homolog (220 aa).

A disordered region spans residues methionine 1–threonine 38. Residues cysteine 126–cysteine 147 form an SGF11-type zinc finger. Composition is skewed to low complexity over residues arginine 160–serine 177 and serine 204–phenylalanine 220. Residues arginine 160–phenylalanine 220 form a disordered region.

The protein belongs to the SGF11 family. Component of some SAGA transcription coactivator-HAT complexes. Within the SAGA complex, participates in a subcomplex of SAGA called the DUB module (deubiquitination module).

It localises to the nucleus. In terms of biological role, component of the transcription regulatory histone acetylation (HAT) complex SAGA, a multiprotein complex that activates transcription by remodeling chromatin and mediating histone acetylation and deubiquitination. Within the SAGA complex, participates in a subcomplex that specifically deubiquitinates histone H2B. The SAGA complex is recruited to specific gene promoters by activators, where it is required for transcription. The polypeptide is SAGA-associated factor 11 homolog (Musca domestica (House fly)).